The chain runs to 154 residues: Large-conductance mechanosensitive channel (154 aa).

The next 2 helical transmembrane spans lie at 14-34 (VVDL…VNSL) and 86-106 (VFIN…FFVV).

Belongs to the MscL family. Homopentamer.

It localises to the cell membrane. Functionally, channel that opens in response to stretch forces in the membrane lipid bilayer. May participate in the regulation of osmotic pressure changes within the cell. In Dehalococcoides mccartyi (strain ATCC BAA-2100 / JCM 16839 / KCTC 5957 / BAV1), this protein is Large-conductance mechanosensitive channel.